The sequence spans 109 residues: Putative pterin-4-alpha-carbinolamine dehydratase (109 aa).

It belongs to the pterin-4-alpha-carbinolamine dehydratase family.

The catalysed reaction is (4aS,6R)-4a-hydroxy-L-erythro-5,6,7,8-tetrahydrobiopterin = (6R)-L-erythro-6,7-dihydrobiopterin + H2O. The polypeptide is Putative pterin-4-alpha-carbinolamine dehydratase (Halorhodospira halophila (strain DSM 244 / SL1) (Ectothiorhodospira halophila (strain DSM 244 / SL1))).